The chain runs to 394 residues: Multidrug resistance protein D (394 aa).

At 1 to 8 the chain is on the cytoplasmic side; it reads MKRQRNVN. The chain crosses the membrane as a helical span at residues 9-29; that stretch reads LLLMLVLLVAVGQMAQTIYIP. The Periplasmic portion of the chain corresponds to 30 to 46; that stretch reads AIADMARDLNVREGAVQ. Residues 47 to 67 form a helical membrane-spanning segment; that stretch reads SVMGAYLLTYGVSQLFYGPIS. Over 68–73 the chain is Cytoplasmic; it reads DRVGRR. A helical membrane pass occupies residues 74–94; that stretch reads PVILVGMSIFMLATLVAVTTS. Serine 95 is a topological domain (periplasmic). Residues 96–116 traverse the membrane as a helical segment; it reads LTVLIAASAMQGMGTGVGGVM. Residues 117-134 lie on the Cytoplasmic side of the membrane; it reads ARTLPRDLYERTQLRHAN. The chain crosses the membrane as a helical span at residues 135-155; it reads SLLNMGILVSPLLAPLIGGLL. Residues 156 to 162 are Periplasmic-facing; it reads DTMWNWR. Residues 163–183 form a helical membrane-spanning segment; the sequence is ACYLFLLVLCAGVTFSMARWM. The Cytoplasmic segment spans residues 184 to 212; the sequence is PETRPVDAPRTRLLTSYKTLFGNSGFNCY. Residues 213 to 233 traverse the membrane as a helical segment; that stretch reads LLMLIGGLAGIAAFEACSGVL. The Periplasmic portion of the chain corresponds to 234 to 242; the sequence is MGAVLGLSS. A helical membrane pass occupies residues 243–263; the sequence is MTVSILFILPIPAAFFGAWFA. Over 264 to 276 the chain is Cytoplasmic; that stretch reads GRPNKRFSTLMWQ. The chain crosses the membrane as a helical span at residues 277–297; it reads SVICCLLAGLLMWIPDWFGVM. Asparagine 298 is a topological domain (periplasmic). A helical transmembrane segment spans residues 299–319; sequence VWTLLVPAALFFFGAGMLFPL. Residues 320 to 329 are Cytoplasmic-facing; that stretch reads ATSGAMEPFP. A helical transmembrane segment spans residues 330–350; the sequence is FLAGTAGALVGGLQNIGSGVL. At 351–364 the chain is on the periplasmic side; sequence ASLSAMLPQTGQGS. Residues 365–385 form a helical membrane-spanning segment; that stretch reads LGLLMTLMGLLIVLCWLPLAT. Over 386 to 394 the chain is Cytoplasmic; the sequence is RMSHQGQPV.

The protein belongs to the major facilitator superfamily.

Its subcellular location is the cell inner membrane. In terms of biological role, multidrug resistance pump that participates in a low energy shock adaptive response. The polypeptide is Multidrug resistance protein D (emrD) (Escherichia coli (strain K12)).